Consider the following 195-residue polypeptide: Orotate phosphoribosyltransferase (195 aa).

5-phospho-alpha-D-ribose 1-diphosphate-binding positions include Arg-86, Lys-90, His-92, and 111–119 (DDVATTGVS). Residues Thr-115 and Arg-143 each contribute to the orotate site.

Belongs to the purine/pyrimidine phosphoribosyltransferase family. PyrE subfamily. Homodimer. Mg(2+) serves as cofactor.

It carries out the reaction orotidine 5'-phosphate + diphosphate = orotate + 5-phospho-alpha-D-ribose 1-diphosphate. It participates in pyrimidine metabolism; UMP biosynthesis via de novo pathway; UMP from orotate: step 1/2. In terms of biological role, catalyzes the transfer of a ribosyl phosphate group from 5-phosphoribose 1-diphosphate to orotate, leading to the formation of orotidine monophosphate (OMP). In Saccharolobus solfataricus (strain ATCC 35092 / DSM 1617 / JCM 11322 / P2) (Sulfolobus solfataricus), this protein is Orotate phosphoribosyltransferase.